Consider the following 196-residue polypeptide: Ribonuclease S-F11 (196 aa).

A disulfide bond links C16 and C21. N-linked (GlcNAc...) asparagine glycosylation is present at N28. The active-site Proton donor is the H32. RNA-binding positions include H32 and 69–70; that span reads QL. 3 disulfides stabilise this stretch: C46/C94, C153/C186, and C169/C180. Q87 is a catalytic residue. 90 to 91 contributes to the RNA binding site; sequence KH. H91 acts as the Proton acceptor in catalysis.

It belongs to the RNase T2 family. As to quaternary structure, monomer.

The protein resides in the secreted. It localises to the extracellular space. It carries out the reaction a ribonucleotidyl-ribonucleotide-RNA + H2O = a 3'-end 3'-phospho-ribonucleotide-RNA + a 5'-end dephospho-ribonucleoside-RNA + H(+). In terms of biological role, self-incompatibility (SI) is the inherited ability of a flowering plant to prevent self-fertilization by discriminating between self and non-self pollen during pollination. In many species of the Solanaceae, self-incompatibility is controlled by the single, multiallelic locus S. This is Ribonuclease S-F11 from Nicotiana alata (Winged tobacco).